We begin with the raw amino-acid sequence, 183 residues long: NRR repressor homolog 1 (183 aa).

Disordered stretches follow at residues 1-40 and 66-183; these read MEGVDVKAPRPGCGGDDGGAAAASLSARREEEEEGAVVGG and NGEE…PTDQ. Residues 31–40 are compositionally biased toward acidic residues; the sequence is EEEEGAVVGG. The segment covering 70–79 has biased composition (gly residues); that stretch reads GAAGGDGDGA. Over residues 101–115 the composition is skewed to acidic residues; that stretch reads FEFEEAAAGAGDDDA. The segment covering 135 to 145 has biased composition (basic and acidic residues); that stretch reads AVEKRRTEKEA. A compositionally biased stretch (acidic residues) spans 150–161; it reads AEDDDDEQEGGE. Over residues 163–183 the composition is skewed to basic and acidic residues; sequence VEGKEEHRPGRRVEAHGPTDQ.

The protein belongs to the NPR1-interactor family. Interacts with NPR1/NH1. Interacts with NPR3/NH3.

The protein localises to the nucleus. Binds to and represses NPR1/NH1-mediated transcriptional activation of LG2 in vitro. This chain is NRR repressor homolog 1, found in Oryza sativa subsp. japonica (Rice).